A 1473-amino-acid chain; its full sequence is Collagen alpha-1(XVII) chain (1473 aa).

The span at 1–19 (MDITQKNKRDGTEVTERII) shows a compositional bias: basic and acidic residues. Disordered stretches follow at residues 1–155 (MDIT…PSTR) and 168–188 (GSRS…PIPK). The Cytoplasmic portion of the chain corresponds to 1–474 (MDITQKNKRD…CGSWCSWWKW (474 aa)). The tract at residues 1-572 (MDITQKNKRD…MTEQENGNLR (572 aa)) is nonhelical region (NC16). Composition is skewed to polar residues over residues 57-96 (LTHG…SPGS), 111-120 (EGSSSGNSSP), and 170-184 (RSAS…SNTL). The necessary for interaction with DST and for the recruitment of DST to hemidesmosome stretch occupies residues 146–231 (RLQSASPSTR…WSSTLPAGSS (86 aa)). A helical; Signal-anchor for type II membrane protein membrane pass occupies residues 475–495 (LLGLLLTWLLLLGLLFGLIAL). Residues 496–1473 (AEEVRKLKAR…RRRRSIAVKP (978 aa)) lie on the Extracellular side of the membrane. Disordered regions lie at residues 567 to 1017 (ENGN…LSSS), 1173 to 1234 (FRGI…ISGA), and 1261 to 1308 (SFIV…SSMG). Positions 573 to 1459 (GSPGPKGDMG…KGEKGDKGDQ (887 aa)) are triple-helical region. Composition is skewed to low complexity over residues 619–638 (EPGM…MGPR), 667–678 (PGSVGPKGSIGP), 729–742 (EPGA…AGPD), and 769–790 (PGKP…PGRP). The span at 814 to 835 (PGPPGPPGAMGPPGPPGAPGPV) shows a compositional bias: pro residues. 2 stretches are compositionally biased toward low complexity: residues 837–847 (PAGLPGQQGPR) and 854–866 (GESF…SFSE). Pro residues-rich tracts occupy residues 878–899 (PPGP…PGPP) and 913–922 (PPGPPGPPGP). Low complexity predominate over residues 940–957 (FPGLSGSGSSSLGLNLQG). 2 stretches are compositionally biased toward pro residues: residues 1001 to 1011 (PPGPPGPPGPP) and 1179 to 1188 (PPGPPGPPGL). A compositionally biased stretch (polar residues) spans 1198-1210 (TEDLSSYLQTAGL). Pro residues-rich tracts occupy residues 1214-1228 (PGPP…PRGP) and 1266-1275 (PPGPPGPQGP). The segment covering 1283–1307 (STDSSYSRSGSSSSFSRDTSYSSSM) has biased composition (low complexity). The N-linked (GlcNAc...) asparagine glycan is linked to Asn-1404. The interval 1417–1473 (GAIPGPPGQKGEMGIPGPKGERGPAGPPGPRGHKGEKGDKGDQFYIGRRRRSIAVKP) is disordered. Residues 1449–1458 (HKGEKGDKGD) are compositionally biased toward basic and acidic residues. The tract at residues 1460–1473 (FYIGRRRRSIAVKP) is nonhelical region (NC1). Basic residues predominate over residues 1463 to 1473 (GRRRRSIAVKP).

In terms of assembly, homotrimers of alpha 1(XVII)chains. Interacts (via cytoplasmic region) with ITGB4 (via cytoplasmic region). Interacts (via cytoplasmic region) with DST (via N-terminus). Interacts (via N-terminus) with PLEC. Interacts (via cytoplasmic region) with DSP. The intracellular/endo domain is disulfide-linked. In terms of processing, prolines at the third position of the tripeptide repeating unit (G-X-Y) are hydroxylated in some or all of the chains. Post-translationally, the ectodomain is shedded from the surface of keratinocytes resulting in a 120-kDa soluble form, also named as 120 kDa linear IgA disease antigen homolog. The shedding is mediated by membrane-bound metalloproteases.

Its subcellular location is the cell junction. The protein localises to the hemidesmosome. It localises to the membrane. The protein resides in the secreted. It is found in the extracellular space. Its subcellular location is the extracellular matrix. The protein localises to the basement membrane. Functionally, may play a role in the integrity of hemidesmosome and the attachment of basal keratinocytes to the underlying basement membrane. In terms of biological role, the 120 kDa linear IgA disease antigen homolog is an anchoring filament component involved in dermal-epidermal cohesion. The protein is Collagen alpha-1(XVII) chain (COL17A1) of Bos taurus (Bovine).